Here is a 90-residue protein sequence, read N- to C-terminus: Protein S100-A6 (90 aa).

EF-hand domains are found at residues 12–47 and 48–83; these read LVAIFHKYSGQEGDKNTLSKSELKELIQKELTIGAK and LQDAEIAKLMDDLDRNKDQVVNFQEYVTFLGALAMI. Ca(2+)-binding residues include Thr28 and Glu33. Residue Lys40 is modified to N6-acetyllysine. N6-acetyllysine; alternate is present on Lys47. Lys47 bears the N6-succinyllysine; alternate mark. Ca(2+) is bound by residues Asp61, Asn63, Asp65, and Glu72.

This sequence belongs to the S-100 family. Homodimer; head to tail assembly of 2 subunits. Interacts with CACYBP in a calcium-dependent manner. Interacts with ANXA2 and ANXA11 (via N-terminus). Interacts with SUGT1. Interacts with TP53; has higher affinity for TP53 that is phosphorylated on its N-terminal domain, and lower affinity for TP53 that is phosphorylated on its C-terminal domain. Interacts with tropomyosin. Interacts with FKBP4. Interacts with PPP5C (via TPR repeats); the interaction is calcium-dependent and modulates PPP5C activity. Interacts with TPPP; this interaction inhibits TPPP dimerization.

It localises to the nucleus envelope. The protein resides in the cytoplasm. Its subcellular location is the cell membrane. Its function is as follows. May function as calcium sensor and modulator, contributing to cellular calcium signaling. May function by interacting with other proteins, such as TPR-containing proteins, and indirectly play a role in many physiological processes such as the reorganization of the actin cytoskeleton and in cell motility. Binds 2 calcium ions. Calcium binding is cooperative. This chain is Protein S100-A6 (S100A6), found in Sus scrofa (Pig).